A 143-amino-acid polypeptide reads, in one-letter code: Snake venom vascular endothelial growth factor toxin (143 aa).

The signal sequence occupies residues 1-24; it reads MAVYLLAVAILFCIQGWPSGTVQG. Position 25 is a pyrrolidone carboxylic acid (Glu) (Glu-25). Cystine bridges form between Cys-38–Cys-80, Cys-69–Cys-115, and Cys-73–Cys-117. The tract at residues 117-143 is disordered; sequence CRPRSPGDVNDGRNPKEGEPRARFPFV.

Belongs to the PDGF/VEGF growth factor family. Snake venom VEGF subfamily. In terms of assembly, homodimer; disulfide-linked. Interacts with VEGF receptor-1 (FLT1) with a high affinity, whereas it binds to VEGF receptor-2 (KDR) with a low affinity. Does not bind to VEGFR-3/FLT4 and neuropilin-1 (NRP1). Expressed by the venom gland.

It is found in the secreted. Snake venom VEGFs may contribute to venom dispersion and prey subjugation by inducing vascular permeability and hypotension. This protein activates the vascular endothelial growth factor receptor-1 (VEGFR-1/FLT1), and consequently promotes the proliferation and tissue factor production of endothelial cells, the neovascularization in the chicken chorioallantoic membrane, and increases vascular permeability. Also stimulates tissue-factor production and human monocyte chemotaxis. This chain is Snake venom vascular endothelial growth factor toxin, found in Protobothrops mucrosquamatus (Taiwan habu).